We begin with the raw amino-acid sequence, 336 residues long: S-adenosylmethionine:tRNA ribosyltransferase-isomerase (336 aa).

This sequence belongs to the QueA family. Monomer.

The protein resides in the cytoplasm. The enzyme catalyses 7-aminomethyl-7-carbaguanosine(34) in tRNA + S-adenosyl-L-methionine = epoxyqueuosine(34) in tRNA + adenine + L-methionine + 2 H(+). It participates in tRNA modification; tRNA-queuosine biosynthesis. Transfers and isomerizes the ribose moiety from AdoMet to the 7-aminomethyl group of 7-deazaguanine (preQ1-tRNA) to give epoxyqueuosine (oQ-tRNA). In Sulfurihydrogenibium sp. (strain YO3AOP1), this protein is S-adenosylmethionine:tRNA ribosyltransferase-isomerase.